Reading from the N-terminus, the 569-residue chain is Cytochrome P450 monooxygenase abl1 (569 aa).

Cys464 contacts heme.

Belongs to the cytochrome P450 family. The cofactor is heme.

Its pathway is hormone biosynthesis. Functionally, cytochrome P450 monooxygenase; part of the gene cluster that mediates the biosynthesis of abscisic acid (ABA), a phytohormone that acts antagonistically toward salicylic acid (SA), jasmonic acid (JA) and ethylene (ETH) signaling, to impede plant defense responses. The first step of the pathway catalyzes the reaction from farnesyl diphosphate to alpha-ionylideneethane performed by the alpha-ionylideneethane synthase abl3 via a three-step reaction mechanism involving 2 neutral intermediates, beta-farnesene and allofarnesene. The cytochrome P450 monooxygenase abl1 might then be involved in the conversion of alpha-ionylideneethane to alpha-ionylideneacetic acid. Alpha-ionylideneacetic acid is further converted to abscisic acid in 2 steps involving the cytochrome P450 monooxygenase abl2 and the short-chain dehydrogenase/reductase abl4, via the intermediates 1'-deoxy-ABA or 1',4'-trans-diol-ABA, depending on the order of action of these 2 enzymes. Abl2 is responsible for the hydroxylation of carbon atom C-1' and abl4 might be involved in the oxidation of the C-4' carbon atom. In Leptosphaeria maculans (strain JN3 / isolate v23.1.3 / race Av1-4-5-6-7-8) (Blackleg fungus), this protein is Cytochrome P450 monooxygenase abl1.